We begin with the raw amino-acid sequence, 585 residues long: Cytidine monophosphate-N-acetylneuraminic acid hydroxylase (585 aa).

Positions 9-107 constitute a Rieske domain; the sequence is LSPVEVANLK…VEMDENNRLL (99 aa). 4 residues coordinate [2Fe-2S] cluster: cysteine 49, histidine 51, cysteine 70, and histidine 73.

Belongs to the CMP-Neu5Ac hydroxylase family. [2Fe-2S] cluster is required as a cofactor.

Its subcellular location is the cytoplasm. It carries out the reaction CMP-N-acetyl-beta-neuraminate + 2 Fe(II)-[cytochrome b5] + O2 + 2 H(+) = CMP-N-glycoloyl-beta-neuraminate + 2 Fe(III)-[cytochrome b5] + H2O. It functions in the pathway amino-sugar metabolism; N-acetylneuraminate metabolism. Its function is as follows. Sialic acids are components of carbohydrate chains of glycoconjugates and are involved in cell-cell recognition and cell-pathogen interactions. Catalyzes the conversion of CMP-N-acetylneuraminic acid (CMP-Neu5Ac) into its hydroxylated derivative CMP-N-glycolylneuraminic acid (CMP-Neu5Gc), a sialic acid abundantly expressed at the surface of many cells. The sequence is that of Cytidine monophosphate-N-acetylneuraminic acid hydroxylase (CMAH) from Pongo pygmaeus (Bornean orangutan).